The chain runs to 213 residues: Orotate phosphoribosyltransferase (213 aa).

5-phospho-alpha-D-ribose 1-diphosphate is bound at residue Lys-26. Residue Phe-34–Phe-35 participates in orotate binding. Residues Tyr-72–Lys-73, Arg-99, Lys-100, Lys-103, His-105, and Asp-124–Ala-132 contribute to the 5-phospho-alpha-D-ribose 1-diphosphate site. Orotate is bound by residues Thr-128 and Arg-156.

This sequence belongs to the purine/pyrimidine phosphoribosyltransferase family. PyrE subfamily. As to quaternary structure, homodimer. It depends on Mg(2+) as a cofactor.

The catalysed reaction is orotidine 5'-phosphate + diphosphate = orotate + 5-phospho-alpha-D-ribose 1-diphosphate. The protein operates within pyrimidine metabolism; UMP biosynthesis via de novo pathway; UMP from orotate: step 1/2. Catalyzes the transfer of a ribosyl phosphate group from 5-phosphoribose 1-diphosphate to orotate, leading to the formation of orotidine monophosphate (OMP). The protein is Orotate phosphoribosyltransferase of Vibrio atlanticus (strain LGP32) (Vibrio splendidus (strain Mel32)).